The following is a 429-amino-acid chain: Probable M18 family aminopeptidase 2 (429 aa).

3 residues coordinate Zn(2+): H82, H156, and H401.

This sequence belongs to the peptidase M18 family. Zn(2+) serves as cofactor.

The sequence is that of Probable M18 family aminopeptidase 2 from Pseudomonas putida (strain ATCC 700007 / DSM 6899 / JCM 31910 / BCRC 17059 / LMG 24140 / F1).